The primary structure comprises 220 residues: MKFFIDTANLDQIREANDMGVLDGVTTNPSLMAKEGISGKDNCMRHYLAICEIVDGDVSAEVIATDYEGMIREGEELAALHPQIVVKVPCTAEGIKAIKYFSDKGIRTNCTLIFTVGQALLAAKAGASYVSPFVGRLDDIASDGIKLVENIVAMFGFYRYETEVLAASIRHTQHIIQCLEAGADVATCPLNAIKGLLKHPLTDSGLKAFLEDHRRVNEGK.

The active-site Schiff-base intermediate with substrate is the K87.

This sequence belongs to the transaldolase family. Type 3B subfamily.

The protein localises to the cytoplasm. It catalyses the reaction D-sedoheptulose 7-phosphate + D-glyceraldehyde 3-phosphate = D-erythrose 4-phosphate + beta-D-fructose 6-phosphate. Its pathway is carbohydrate degradation; pentose phosphate pathway; D-glyceraldehyde 3-phosphate and beta-D-fructose 6-phosphate from D-ribose 5-phosphate and D-xylulose 5-phosphate (non-oxidative stage): step 2/3. In terms of biological role, transaldolase is important for the balance of metabolites in the pentose-phosphate pathway. This chain is Probable transaldolase, found in Porphyromonas gingivalis (strain ATCC 33277 / DSM 20709 / CIP 103683 / JCM 12257 / NCTC 11834 / 2561).